Reading from the N-terminus, the 2731-residue chain is Teneurin-m (2731 aa).

2 disordered regions span residues methionine 1–glutamine 60 and leucine 103–asparagine 136. Topologically, residues methionine 1 to serine 229 are cytoplasmic. Positions threonine 110–asparagine 119 are enriched in pro residues. The segment covering proline 120–asparagine 136 has biased composition (polar residues). Residues proline 230–leucine 250 traverse the membrane as a helical segment. The Extracellular segment spans residues threonine 251 to alanine 2731. Residues serine 321–proline 387 form a disordered region. The span at serine 322–alanine 370 shows a compositional bias: low complexity. 4 consecutive EGF-like domains span residues glycine 536–serine 572, arginine 574–glutamate 606, aspartate 643–serine 676, and threonine 738–glycine 774. 11 disulfides stabilise this stretch: cysteine 540-cysteine 549, cysteine 545-cysteine 560, cysteine 562-cysteine 571, cysteine 578-cysteine 589, cysteine 583-cysteine 594, cysteine 596-cysteine 605, cysteine 651-cysteine 664, cysteine 666-cysteine 675, cysteine 742-cysteine 752, cysteine 746-cysteine 762, and cysteine 764-cysteine 773. Residue asparagine 857 is glycosylated (N-linked (GlcNAc...) asparagine). NHL repeat units lie at residues glutamate 1160–aspartate 1201, glycine 1202–threonine 1246, serine 1391–isoleucine 1434, and cysteine 1459–serine 1502. One copy of the YD repeat lies at threonine 1618–valine 1652. A disordered region spans residues leucine 2691–alanine 2731. The span at alanine 2704–leucine 2724 shows a compositional bias: basic residues.

It belongs to the tenascin family. Teneurin subfamily. As to quaternary structure, homodimer. Heterodimer with Ten-a. Interacts with Ten-a; the interaction occurs at the neuromuscular junction. Interacts with alpha-Spec and cher. In terms of processing, phosphorylated. Phosphorylation occurs at tyrosine residues. Proteolytically cleaved. As to expression, expressed in muscles and motor neurons (at protein level).

The protein resides in the cytoplasm. The protein localises to the postsynaptic cell membrane. It localises to the synapse. Its subcellular location is the synaptosome. It is found in the membrane. Functionally, involved in neural development, regulating the establishment of proper connectivity within the nervous system. Acts as a homophilic and heterophilic synaptic cell adhesion molecule that drives synapse assembly. Promotes bi-directional trans-synaptic signaling with Ten-a to organize neuromuscular synapses. Functions in olfactory synaptic partner matching by promoting homophilic cell adhesion between pre-synaptic olfactory receptor neurons (ORN) axons and post-synaptic projection neurons (PN) dendrites partner in the developing antennal lobe to form stable connections. Also required for peripheral axon growth cone guidance and target recognition of motor neurons. The polypeptide is Teneurin-m (Ten-m) (Drosophila melanogaster (Fruit fly)).